Reading from the N-terminus, the 401-residue chain is Jumonji C domain-containing protein 5 (401 aa).

One can recognise a JmjC domain in the interval 255–401 (EYLAQHELFA…PSFSVSFWWE (147 aa)). Histidine 306, aspartate 308, and histidine 385 together coordinate Fe cation.

Fe(2+) is required as a cofactor. As to expression, expressed in neurons close to the dorsal lateral neurons involved in circadian rhythm.

It is found in the nucleus. Its subcellular location is the nucleoplasm. The protein localises to the cytoplasm. The catalysed reaction is L-arginyl-[protein] + 2-oxoglutarate + O2 = (3R)-3-hydroxy-L-arginyl-[protein] + succinate + CO2. Its function is as follows. Bifunctional enzyme that acts both as an endopeptidase and 2-oxoglutarate-dependent monooxygenase. May be involved in regulation of behavior and circadian rhythms. This chain is Jumonji C domain-containing protein 5, found in Drosophila melanogaster (Fruit fly).